A 490-amino-acid polypeptide reads, in one-letter code: Cytochrome P450 71A21 (490 aa).

Residues 1-21 (MESMTMIILQSLIIFITILFF) traverse the membrane as a helical segment. C432 contributes to the heme binding site.

This sequence belongs to the cytochrome P450 family. It depends on heme as a cofactor.

The protein localises to the membrane. The protein is Cytochrome P450 71A21 (CYP71A21) of Arabidopsis thaliana (Mouse-ear cress).